The primary structure comprises 834 residues: Protein translocase subunit SecA (834 aa).

Residues Q85, 103 to 107, and D491 each bind ATP; that span reads GEGKT. A disordered region spans residues 790–809; it reads RETSTNINDGEGGSHEPIKR. Zn(2+) is bound by residues C820, C822, C831, and C832.

Belongs to the SecA family. Monomer and homodimer. Part of the essential Sec protein translocation apparatus which comprises SecA, SecYEG and auxiliary proteins SecDF. Other proteins may also be involved. The cofactor is Zn(2+).

The protein localises to the cell membrane. It is found in the cytoplasm. The enzyme catalyses ATP + H2O + cellular proteinSide 1 = ADP + phosphate + cellular proteinSide 2.. Functionally, part of the Sec protein translocase complex. Interacts with the SecYEG preprotein conducting channel. Has a central role in coupling the hydrolysis of ATP to the transfer of proteins into and across the cell membrane, serving as an ATP-driven molecular motor driving the stepwise translocation of polypeptide chains across the membrane. This is Protein translocase subunit SecA from Clostridium novyi (strain NT).